The chain runs to 570 residues: Urease subunit alpha (570 aa).

The region spanning 131-570 (GGMDSHIHFI…LPMAQRYFLF (440 aa)) is the Urease domain. Residues His-136, His-138, and Lys-219 each coordinate Ni(2+). An N6-carboxylysine modification is found at Lys-219. His-221 is a binding site for substrate. Ni(2+)-binding residues include His-248 and His-274. His-322 serves as the catalytic Proton donor. Residue Asp-362 participates in Ni(2+) binding.

This sequence belongs to the metallo-dependent hydrolases superfamily. Urease alpha subunit family. Heterotrimer of UreA (gamma), UreB (beta) and UreC (alpha) subunits. Three heterotrimers associate to form the active enzyme. Ni cation serves as cofactor. Post-translationally, carboxylation allows a single lysine to coordinate two nickel ions.

The protein resides in the cytoplasm. It carries out the reaction urea + 2 H2O + H(+) = hydrogencarbonate + 2 NH4(+). The protein operates within nitrogen metabolism; urea degradation; CO(2) and NH(3) from urea (urease route): step 1/1. In Rhizobium meliloti (strain 1021) (Ensifer meliloti), this protein is Urease subunit alpha.